We begin with the raw amino-acid sequence, 205 residues long: Dephospho-CoA kinase (205 aa).

The DPCK domain maps to 13–205 (RIGLTGGIAS…KWINTIREIL (193 aa)). 21 to 26 (ASGKST) provides a ligand contact to ATP.

This sequence belongs to the CoaE family.

It is found in the cytoplasm. It catalyses the reaction 3'-dephospho-CoA + ATP = ADP + CoA + H(+). The protein operates within cofactor biosynthesis; coenzyme A biosynthesis; CoA from (R)-pantothenate: step 5/5. In terms of biological role, catalyzes the phosphorylation of the 3'-hydroxyl group of dephosphocoenzyme A to form coenzyme A. This Prochlorococcus marinus (strain MIT 9312) protein is Dephospho-CoA kinase.